Here is a 294-residue protein sequence, read N- to C-terminus: Elongation factor Ts (294 aa).

The segment at 81–84 is involved in Mg(2+) ion dislocation from EF-Tu; that stretch reads TDFV.

The protein belongs to the EF-Ts family.

Its subcellular location is the cytoplasm. Associates with the EF-Tu.GDP complex and induces the exchange of GDP to GTP. It remains bound to the aminoacyl-tRNA.EF-Tu.GTP complex up to the GTP hydrolysis stage on the ribosome. The polypeptide is Elongation factor Ts (Lawsonia intracellularis (strain PHE/MN1-00)).